A 625-amino-acid polypeptide reads, in one-letter code: tRNA uridine 5-carboxymethylaminomethyl modification enzyme MnmG (625 aa).

Residues 16-21 (GGGHAG), I128, and S183 contribute to the FAD site. 275–289 (GPRYCPSIEDKVVRF) contributes to the NAD(+) binding site. Q372 is a binding site for FAD.

Belongs to the MnmG family. In terms of assembly, homodimer. Heterotetramer of two MnmE and two MnmG subunits. It depends on FAD as a cofactor.

The protein localises to the cytoplasm. In terms of biological role, NAD-binding protein involved in the addition of a carboxymethylaminomethyl (cmnm) group at the wobble position (U34) of certain tRNAs, forming tRNA-cmnm(5)s(2)U34. The chain is tRNA uridine 5-carboxymethylaminomethyl modification enzyme MnmG from Protochlamydia amoebophila (strain UWE25).